Here is a 1054-residue protein sequence, read N- to C-terminus: Topoisomerase 1-associated factor 1 (1054 aa).

Disordered stretches follow at residues 522 to 543 (KADD…HESA), 823 to 846 (RDDK…EDDE), 865 to 953 (EMFA…TINL), and 968 to 1054 (VSDG…DDDE). The segment covering 823–838 (RDDKERRGAGGDKEGS) has biased composition (basic and acidic residues). Positions 877–887 (KTKQKLKRKGT) are enriched in basic residues. 3 stretches are compositionally biased toward basic and acidic residues: residues 890-901 (STREREKQRDYT), 928-953 (ERDR…TINL), and 979-1017 (TESH…HDSD).

It belongs to the timeless family. Component of the fork protection complex (FPC) consisting of TOF1 and CSM3.

It is found in the nucleus. Forms a fork protection complex (FPC) with CSM3 and which is required for chromosome segregation during meiosis and DNA damage repair. FPC coordinates leading and lagging strand synthesis and moves with the replication fork. FPC stabilizes replication forks in a configuration that is recognized by replication checkpoint sensors. This chain is Topoisomerase 1-associated factor 1 (TOF1), found in Yarrowia lipolytica (strain CLIB 122 / E 150) (Yeast).